The sequence spans 323 residues: CD-NTase-associated protein 12 (323 aa).

The TIR domain occupies 4 to 120 (RIFIGSSSEQ…LDGITVAKFT (117 aa)). Residue E84 is part of the active site. The STING domain stretch occupies residues 154–323 (STALAIGYYN…YVNVLTNVKL (170 aa)). Positions 164, 165, 234, 237, 259, 262, and 263 each coordinate 3',3'-c-di-GMP.

This sequence in the C-terminal section; belongs to the bacterial STING family. In terms of assembly, forms homodimers which subsequently form filaments. In vitro in the presence of c-di-GMP forms filaments up to 300 nm in length with an ordered array of parallel-stacked subunits, where the TIR domains form one face of the filament and the STING domains form the other face. Antiparallel double-filament structures are also seen. 3'3'-cGAMP weakly induces filament formation, while 2'3'-cGAMP does not.

The catalysed reaction is NAD(+) + H2O = ADP-D-ribose + nicotinamide + H(+). With respect to regulation, NAD(+) hydrolase activity is strongly stimulated by c-di-GMP, weakly by 3'3'-cGAMP, very weakly by c-di-AMP and not at all by 2'3'-cGAMP. Self-association of TIR domains is required for NADase activity. In terms of biological role, effector protein of a CBASS antiviral system with NAD(+) hydrolase activity. CBASS (cyclic oligonucleotide-based antiphage signaling system) provides immunity against bacteriophage. The CD-NTase protein synthesizes cyclic nucleotides in response to infection; these serve as specific second messenger signals. The signals activate a diverse range of effectors, leading to bacterial cell death and thus abortive phage infection. A type I-D(GG) CBASS system. Its function is as follows. Upon activation by 3'3'-c-di-GMP forms filaments which hydrolyze NAD(+); filament formation is required for enzyme activation. Induction in an E.coli strain that synthesizes c-di-GMP leads to significant growth inhibition. Binds c-di-GMP and 3'3'-cGAMP (3'3'-cyclic GMP-AMP), but not c-di-AMP, 2'3'-cGAMP or cUMP-AMP. The chain is CD-NTase-associated protein 12 from Sphingobacterium faecium (strain DSM 11690 / JCM 21820 / NBRC 15299 / NCIMB 13408 / KS 0470).